A 345-amino-acid chain; its full sequence is D-erythrose-4-phosphate dehydrogenase (345 aa).

Residue 11–12 (RI) coordinates NAD(+). Substrate is bound by residues 158–160 (SCT), R204, 217–218 (TK), and R240. C159 (nucleophile) is an active-site residue. N322 contacts NAD(+).

This sequence belongs to the glyceraldehyde-3-phosphate dehydrogenase family. Epd subfamily. As to quaternary structure, homotetramer.

It is found in the cytoplasm. The enzyme catalyses D-erythrose 4-phosphate + NAD(+) + H2O = 4-phospho-D-erythronate + NADH + 2 H(+). Its pathway is cofactor biosynthesis; pyridoxine 5'-phosphate biosynthesis; pyridoxine 5'-phosphate from D-erythrose 4-phosphate: step 1/5. Functionally, catalyzes the NAD-dependent conversion of D-erythrose 4-phosphate to 4-phosphoerythronate. The polypeptide is D-erythrose-4-phosphate dehydrogenase (Vibrio parahaemolyticus serotype O3:K6 (strain RIMD 2210633)).